The following is a 544-amino-acid chain: Chaperonin GroEL 2 (544 aa).

ATP is bound by residues 29–32 (TLGP), 86–90 (DGTTT), Gly-413, 479–481 (NAA), and Asp-495.

Belongs to the chaperonin (HSP60) family. As to quaternary structure, forms a cylinder of 14 subunits composed of two heptameric rings stacked back-to-back. Interacts with the co-chaperonin GroES.

Its subcellular location is the cytoplasm. The catalysed reaction is ATP + H2O + a folded polypeptide = ADP + phosphate + an unfolded polypeptide.. In terms of biological role, together with its co-chaperonin GroES, plays an essential role in assisting protein folding. The GroEL-GroES system forms a nano-cage that allows encapsulation of the non-native substrate proteins and provides a physical environment optimized to promote and accelerate protein folding. This Synechococcus sp. (strain CC9605) protein is Chaperonin GroEL 2.